Consider the following 329-residue polypeptide: Serpentine receptor class alpha-8 (329 aa).

The next 6 helical transmembrane spans lie at Val-26–Leu-46, Phe-60–Ile-80, Ile-141–Leu-161, Thr-187–Leu-207, Val-231–Ile-251, and Phe-273–Ile-293.

Belongs to the nematode receptor-like protein sra family.

It localises to the membrane. The chain is Serpentine receptor class alpha-8 (sra-8) from Caenorhabditis elegans.